The primary structure comprises 87 residues: uncharacterized protein (87 aa).

The 2Fe-2S ferredoxin-type domain occupies 4–87; the sequence is SIIEITNIKK…KPKGNITIKI (84 aa). [2Fe-2S] cluster-binding residues include C38, C43, C46, and C75.

Requires [2Fe-2S] cluster as cofactor.

This is an uncharacterized protein from Buchnera aphidicola subsp. Acyrthosiphon pisum (strain APS) (Acyrthosiphon pisum symbiotic bacterium).